A 130-amino-acid chain; its full sequence is Small ribosomal subunit protein uS8 (130 aa).

The protein belongs to the universal ribosomal protein uS8 family. As to quaternary structure, part of the 30S ribosomal subunit. Contacts proteins S5 and S12.

In terms of biological role, one of the primary rRNA binding proteins, it binds directly to 16S rRNA central domain where it helps coordinate assembly of the platform of the 30S subunit. The polypeptide is Small ribosomal subunit protein uS8 (Pseudomonas aeruginosa (strain UCBPP-PA14)).